A 65-amino-acid polypeptide reads, in one-letter code: Protein translocase subunit SecE (65 aa).

The chain crosses the membrane as a helical span at residues 38 to 58 (IVIVTVVFFLIFFYALDLGIG).

It belongs to the SecE/SEC61-gamma family. Component of the Sec protein translocase complex. Heterotrimer consisting of SecY, SecE and SecG subunits. The heterotrimers can form oligomers, although 1 heterotrimer is thought to be able to translocate proteins. Interacts with the ribosome. Interacts with SecDF, and other proteins may be involved. Interacts with SecA.

The protein localises to the cell membrane. Essential subunit of the Sec protein translocation channel SecYEG. Clamps together the 2 halves of SecY. May contact the channel plug during translocation. The protein is Protein translocase subunit SecE of Staphylococcus carnosus (strain TM300).